Reading from the N-terminus, the 954-residue chain is Glycine dehydrogenase (decarboxylating) (954 aa).

K704 is modified (N6-(pyridoxal phosphate)lysine).

It belongs to the GcvP family. As to quaternary structure, the glycine cleavage system is composed of four proteins: P, T, L and H. Requires pyridoxal 5'-phosphate as cofactor.

The catalysed reaction is N(6)-[(R)-lipoyl]-L-lysyl-[glycine-cleavage complex H protein] + glycine + H(+) = N(6)-[(R)-S(8)-aminomethyldihydrolipoyl]-L-lysyl-[glycine-cleavage complex H protein] + CO2. Its function is as follows. The glycine cleavage system catalyzes the degradation of glycine. The P protein binds the alpha-amino group of glycine through its pyridoxal phosphate cofactor; CO(2) is released and the remaining methylamine moiety is then transferred to the lipoamide cofactor of the H protein. In Rhizobium johnstonii (strain DSM 114642 / LMG 32736 / 3841) (Rhizobium leguminosarum bv. viciae), this protein is Glycine dehydrogenase (decarboxylating).